Reading from the N-terminus, the 520-residue chain is Peptidoglycan-recognition protein LC (520 aa).

2 stretches are compositionally biased toward polar residues: residues 1–14 (MPFS…QCSN) and 27–36 (KNCSTSSTDS). Disordered regions lie at residues 1 to 78 (MPFS…RISV) and 239 to 278 (DKWK…AQTP). Topologically, residues 1–291 (MPFSNETEMS…PFLPNTVGRK (291 aa)) are cytoplasmic. 2 stretches are compositionally biased toward basic and acidic residues: residues 48 to 58 (RPEKETKDRGT) and 66 to 78 (KSEE…RISV). The helical; Signal-anchor for type II membrane protein transmembrane segment at 292–312 (AVTVTVVFVTLTFLLGIVLAT) threads the bilayer. Over 313–520 (TTNLFGKTLN…ASFANWTHWS (208 aa)) the chain is Extracellular. N-linked (GlcNAc...) asparagine glycosylation occurs at N389. An intrachain disulfide couples C390 to C396. Residues 412–490 (QKCDIAYNFL…KLGKIAPSYR (79 aa)) form the N-acetylmuramoyl-L-alanine amidase domain. N515 is a glycosylation site (N-linked (GlcNAc...) asparagine).

The protein belongs to the N-acetylmuramoyl-L-alanine amidase 2 family. Proteolytically cleaved, probably by a metaloprotease such as Mmp2; proteolytic cleavage leads to activation of the imd/Relish signaling pathway. As to expression, expressed in the fat body and hemocytes.

It is found in the membrane. With respect to regulation, activated by proteolytic cleavage in response to Gram-negative bacterial infection; cleavage may be mediated by endogenous proteases, such as the metalloprotease Mmp2 or elastase, or by bacterially expressed proteases such as the surface serine protease OmpT. Major activator of the imd/Relish pathway and is likely to encode a pattern recognition molecule for the humoral immune response. Required for Relish processing and nuclear translocation following proteolytic cleavage. Involved in the response to lipopolysaccharide (LPS) and peptidoglycan of Gram-negative bacteria. The different isoforms probably display different recognition capabilities to various microbial patterns. In terms of biological role, mediates the response to LPS and Gram-negative bacteria. Its function is as follows. Mediates the response to LPS, peptidoglycan and Gram-negative bacteria. The polypeptide is Peptidoglycan-recognition protein LC (PGRP-LC) (Drosophila melanogaster (Fruit fly)).